We begin with the raw amino-acid sequence, 211 residues long: Ribonuclease HII (211 aa).

The RNase H type-2 domain occupies 1–205 (MRFGVDEAGK…CDDVLAAASQ (205 aa)). Residues D6, E7, and D100 each coordinate a divalent metal cation.

It belongs to the RNase HII family. Requires Mn(2+) as cofactor. Mg(2+) serves as cofactor.

Its subcellular location is the cytoplasm. The enzyme catalyses Endonucleolytic cleavage to 5'-phosphomonoester.. Functionally, endonuclease that specifically degrades the RNA of RNA-DNA hybrids. The protein is Ribonuclease HII of Haloarcula marismortui (strain ATCC 43049 / DSM 3752 / JCM 8966 / VKM B-1809) (Halobacterium marismortui).